The sequence spans 399 residues: MKVLVLNCGSSSVKYQVFDMKDEKVLAKGLAERIGLDGSRIVYQRGVESKKVFEIPLPTHKKAIEEIFRLLVDKNDGILSSLNEIDAVGHRVVHGGDKFIESVLVNDEVYNTFKGILDLAPLHNPYNLQGVDACLELMPGVPQVLVFDTSFHQTMPEEAYIYALPYEWYEKYKIRRYGFHGTSHYYVSRRVAELIGRPVEELKIISCHLGNGASITAIKNGKSIDTSMGYTPLEGLVMGTRCGDIDPAIPILLMEKENLSPKQIDEILNKKSGILGISGVSSDFRDVGEAAEKGNKRAELALKVFAYRVKKYIGAYHAILGGLDVLVFTAGVGERGPLERSLICSGLEHLGIKLDPEKNKVKGEELKISTPDSKVEVWVIPTNEELMIARETVRVVGKK.

Position 7 (Asn7) interacts with Mg(2+). Lys14 serves as a coordination point for ATP. Arg91 is a substrate binding site. Asp148 (proton donor/acceptor) is an active-site residue. ATP contacts are provided by residues 208–212 (HLGNG) and 283–285 (DFR). Residue Glu384 coordinates Mg(2+).

The protein belongs to the acetokinase family. In terms of assembly, homodimer. Requires Mg(2+) as cofactor. Mn(2+) is required as a cofactor.

It is found in the cytoplasm. It carries out the reaction acetate + ATP = acetyl phosphate + ADP. Its pathway is metabolic intermediate biosynthesis; acetyl-CoA biosynthesis; acetyl-CoA from acetate: step 1/2. Its function is as follows. Catalyzes the formation of acetyl phosphate from acetate and ATP. Can also catalyze the reverse reaction. The chain is Acetate kinase from Dictyoglomus thermophilum (strain ATCC 35947 / DSM 3960 / H-6-12).